The primary structure comprises 862 residues: Piwi-like protein 1 (862 aa).

Positions 1-13 (MTGRARARARGRA) are enriched in basic residues. The tract at residues 1–48 (MTGRARARARGRARGQETVQHVGAAASQQPGYIPPRPQQSPTEGDLVG) is disordered. R14 carries the omega-N-methylarginine; by PRMT5; alternate modification. At R14 the chain carries Symmetric dimethylarginine; by PRMT5; alternate. R49 bears the Omega-N-methylarginine; by PRMT5 mark. R53 carries the post-translational modification Omega-N-methylarginine; alternate. R53 bears the Symmetric dimethylarginine; alternate mark. The D-box signature appears at 218 to 225 (RRLLKIMN). The PAZ domain maps to 279 to 392 (TVLDFMFNLY…LIPELCYLTG (114 aa)). The interval 317–319 (TYR) is required for binding 2'-O-methylated 3'-end of piRNAs. R371 is modified (omega-N-methylarginine; by PRMT5). An MID region region spans residues 480–616 (SKETRGAPLI…LQMNCKMGGE (137 aa)). Residues 556-848 (IVVCLLSSNR…LAFLVGQSIH (293 aa)) form the Piwi domain. Catalysis depends on residues D633, E671, D703, and H837.

This sequence belongs to the argonaute family. Piwi subfamily. As to quaternary structure, interacts (via Piwi domain) with DICER1, suggesting that it forms ribonucleoprotein RISC complexes; this interaction is regulated by HSP90AB1 activity. Interacts with MAEL, KIF17, PABPC1, PRMT5 and WDR77. Interacts (when methylated on arginine residues) with TDRD1, TDRKH/TDRD2, RNF17/TDRD4, TDRD6, TDRD7 and TDRD9. Interacts with CLOCK. Interacts with MOV10L1. Interacts with ANAPC10; interaction oly takes place following piRNA-binding. Interacts with RNF8; leading to sequester RNF8 in the cytoplasm. Interacts with Tex19.1 and, probably, Tex19.2. Mg(2+) serves as cofactor. Ubiquitinated by the anaphase promoting complex/cyclosome (APC/C) in late spermatids, leading to its degradation. Ubiquitination only takes place following piRNA-binding in adult testis. Ubiquitination and degradation in late spermatogenesis by APC/C is probably required to release RNF8 from the cytoplasm and promote histone to protamine exchange by RNF8. In terms of processing, arginine methylation by PRMT5 is required for the interaction with Tudor domain-containing protein (TDRD1, TDRKH/TDRD2, RNF17/TDRD4, TDRD6, TDRD7 and TDRD9) and subsequent localization to the meiotic nuage, also named P granule. Expressed in brain. Expressed in testis, specifically in spermatocytes (at protein level). Only detected in germ lineage cells of adult testis. Expressed in male gonads 2 weeks after birth at the initiation of spermatogenesis, but not expressed in female gonads.

It is found in the cytoplasm. Functionally, endoribonuclease that plays a central role in postnatal germ cells by repressing transposable elements and preventing their mobilization, which is essential for the germline integrity. Acts via the piRNA metabolic process, which mediates the repression of transposable elements during meiosis by forming complexes composed of piRNAs and Piwi proteins and governs the methylation and subsequent repression of transposons. Directly binds methylated piRNAs, a class of 24 to 30 nucleotide RNAs that are generated by a Dicer-independent mechanism and are primarily derived from transposons and other repeated sequence elements. Strongly prefers a uridine in the first position of their guide (g1U preference, also named 1U-bias). Not involved in the piRNA amplification loop, also named ping-pong amplification cycle. Acts as an endoribonuclease that cleaves transposon messenger RNAs. Besides their function in transposable elements repression, piRNAs are probably involved in other processes during meiosis such as translation regulation. Probable component of some RISC complex, which mediates RNA cleavage and translational silencing. Also plays a role in the formation of chromatoid bodies and is required for some miRNAs stability. Required to sequester RNF8 in the cytoplasm until late spermatogenesis; RNF8 being released upon ubiquitination and degradation of PIWIL1. The sequence is that of Piwi-like protein 1 from Mus musculus (Mouse).